A 496-amino-acid polypeptide reads, in one-letter code: Genome polyprotein (496 aa).

Over Ser-1–Ser-447 the chain is Extracellular. 6 disulfide bridges follow: Cys-3-Cys-30, Cys-60-Cys-116, Cys-60-Cys-121, Cys-74-Cys-105, Cys-92-Cys-116, and Cys-92-Cys-121. The tract at residues Asp-98–Gly-111 is fusion peptide. Residue Asn-154 is glycosylated (N-linked (GlcNAc...) asparagine; by host). Disulfide bonds link Cys-186/Cys-290 and Cys-307/Cys-338. A helical membrane pass occupies residues Ile-448–Gly-468. Residues Leu-469–Ser-479 are Cytoplasmic-facing. A helical transmembrane segment spans residues Phe-480–Ala-496.

Homodimer; in the endoplasmic reticulum and Golgi. In terms of processing, N-glycosylated.

Its subcellular location is the virion membrane. The protein localises to the host endoplasmic reticulum membrane. Binds to host cell surface receptor and mediates fusion between viral and cellular membranes. Envelope protein is synthesized in the endoplasmic reticulum in the form of heterodimer with protein prM. They play a role in virion budding in the ER, and the newly formed immature particle is covered with 60 spikes composed of heterodimer between precursor prM and envelope protein E. The virion is transported to the Golgi apparatus where the low pH causes dissociation of PrM-E heterodimers and formation of E homodimers. prM-E cleavage is ineficient, and many virions are only partially matured. These uncleaved prM would play a role in immune evasion. The sequence is that of Genome polyprotein from Bos taurus (Bovine).